The chain runs to 215 residues: Phosphatidylserine decarboxylase proenzyme (215 aa).

Ser-184 (schiff-base intermediate with substrate; via pyruvic acid) is an active-site residue. Ser-184 carries the post-translational modification Pyruvic acid (Ser); by autocatalysis.

This sequence belongs to the phosphatidylserine decarboxylase family. PSD-A subfamily. In terms of assembly, heterodimer of a large membrane-associated beta subunit and a small pyruvoyl-containing alpha subunit. The cofactor is pyruvate. Is synthesized initially as an inactive proenzyme. Formation of the active enzyme involves a self-maturation process in which the active site pyruvoyl group is generated from an internal serine residue via an autocatalytic post-translational modification. Two non-identical subunits are generated from the proenzyme in this reaction, and the pyruvate is formed at the N-terminus of the alpha chain, which is derived from the carboxyl end of the proenzyme. The post-translation cleavage follows an unusual pathway, termed non-hydrolytic serinolysis, in which the side chain hydroxyl group of the serine supplies its oxygen atom to form the C-terminus of the beta chain, while the remainder of the serine residue undergoes an oxidative deamination to produce ammonia and the pyruvoyl prosthetic group on the alpha chain.

Its subcellular location is the cell membrane. The enzyme catalyses a 1,2-diacyl-sn-glycero-3-phospho-L-serine + H(+) = a 1,2-diacyl-sn-glycero-3-phosphoethanolamine + CO2. Its pathway is phospholipid metabolism; phosphatidylethanolamine biosynthesis; phosphatidylethanolamine from CDP-diacylglycerol: step 2/2. Catalyzes the formation of phosphatidylethanolamine (PtdEtn) from phosphatidylserine (PtdSer). In Ralstonia nicotianae (strain ATCC BAA-1114 / GMI1000) (Ralstonia solanacearum), this protein is Phosphatidylserine decarboxylase proenzyme.